A 273-amino-acid polypeptide reads, in one-letter code: Dermonecrotic toxin LruSicTox-alphaIC1b (273 aa).

H5 is an active-site residue. The Mg(2+) site is built by E25 and D27. H41 serves as the catalytic Nucleophile. 2 disulfide bridges follow: C45/C51 and C47/C190. D85 lines the Mg(2+) pocket.

Belongs to the arthropod phospholipase D family. Class II subfamily. Mg(2+) is required as a cofactor. As to expression, expressed by the venom gland.

Its subcellular location is the secreted. It catalyses the reaction an N-(acyl)-sphingosylphosphocholine = an N-(acyl)-sphingosyl-1,3-cyclic phosphate + choline. The enzyme catalyses an N-(acyl)-sphingosylphosphoethanolamine = an N-(acyl)-sphingosyl-1,3-cyclic phosphate + ethanolamine. It carries out the reaction a 1-acyl-sn-glycero-3-phosphocholine = a 1-acyl-sn-glycero-2,3-cyclic phosphate + choline. The catalysed reaction is a 1-acyl-sn-glycero-3-phosphoethanolamine = a 1-acyl-sn-glycero-2,3-cyclic phosphate + ethanolamine. In terms of biological role, dermonecrotic toxins cleave the phosphodiester linkage between the phosphate and headgroup of certain phospholipids (sphingolipid and lysolipid substrates), forming an alcohol (often choline) and a cyclic phosphate. This toxin acts on sphingomyelin (SM). It may also act on ceramide phosphoethanolamine (CPE), lysophosphatidylcholine (LPC) and lysophosphatidylethanolamine (LPE), but not on lysophosphatidylserine (LPS), and lysophosphatidylglycerol (LPG). It acts by transphosphatidylation, releasing exclusively cyclic phosphate products as second products. Induces dermonecrosis, hemolysis, increased vascular permeability, edema, inflammatory response, and platelet aggregation. This chain is Dermonecrotic toxin LruSicTox-alphaIC1b, found in Loxosceles rufescens (Mediterranean recluse spider).